The primary structure comprises 416 residues: Histidinol dehydrogenase (416 aa).

Residues Y117, Q178, and N201 each contribute to the NAD(+) site. The substrate site is built by T224, Q246, and H249. The Zn(2+) site is built by Q246 and H249. Active-site proton acceptor residues include E314 and H315. Substrate is bound by residues H315, D348, E402, and H407. D348 is a binding site for Zn(2+). Residue H407 coordinates Zn(2+).

Belongs to the histidinol dehydrogenase family. Zn(2+) serves as cofactor.

The enzyme catalyses L-histidinol + 2 NAD(+) + H2O = L-histidine + 2 NADH + 3 H(+). The protein operates within amino-acid biosynthesis; L-histidine biosynthesis; L-histidine from 5-phospho-alpha-D-ribose 1-diphosphate: step 9/9. Functionally, catalyzes the sequential NAD-dependent oxidations of L-histidinol to L-histidinaldehyde and then to L-histidine. This Staphylococcus aureus (strain Mu50 / ATCC 700699) protein is Histidinol dehydrogenase.